The sequence spans 299 residues: Homeobox protein ceh-24 (299 aa).

Over residues 1 to 35 (MSEKETPSPVLDVKKEKNEETGIDEEKSSEDDCSK) the composition is skewed to basic and acidic residues. 2 disordered regions span residues 1–45 (MSEK…NPSK) and 208–263 (QEKE…SGVF). The homeobox DNA-binding region spans 150 to 209 (RRKRRVLFSQAQVYELERRFKQAKYLTAPEREQLANSIRLTPTQVKIWFQNHRYKCKRQE). Over residues 242–252 (DDKDDEEEEES) the composition is skewed to acidic residues.

The protein belongs to the NK-2 homeobox family. Expressed in the 8 vulval muscles, 8-10 ventral neurons in the head and in the most posterior pharyngeal muscle cell, m8. Expressed in SIA, SIB and SMB sublateral motor neurons, and in muscles of the pharynx and vulva.

It localises to the nucleus. In terms of biological role, probable transcriptional regulator that is required in neural development for the normal formation of sublateral cholinergic motor neuron processes. Plays a role in regulating the expression of acetylcholine transporter protein unc-17 in the sublateral processes. In particular, it is required in sublateral motor neurons for a left-right turning behavior that occurs during the lethargus phase of the normal sleep process called 'flipping'. During 'flipping' animals rotate 180 degrees about their longitudinal axis. The sequence is that of Homeobox protein ceh-24 from Caenorhabditis elegans.